We begin with the raw amino-acid sequence, 363 residues long: Peptide chain release factor 1 (363 aa).

An N5-methylglutamine modification is found at glutamine 237. The segment covering 286 to 296 has biased composition (basic and acidic residues); that stretch reads EKRRSAEESTR. The disordered stretch occupies residues 286-305; sequence EKRRSAEESTRRSLVASGDR.

The protein belongs to the prokaryotic/mitochondrial release factor family. Post-translationally, methylated by PrmC. Methylation increases the termination efficiency of RF1.

It is found in the cytoplasm. Its function is as follows. Peptide chain release factor 1 directs the termination of translation in response to the peptide chain termination codons UAG and UAA. In Shewanella baltica (strain OS155 / ATCC BAA-1091), this protein is Peptide chain release factor 1.